The following is a 461-amino-acid chain: tRNA(Ile)-lysidine synthase (461 aa).

Residue 26–31 (SGGPDS) participates in ATP binding.

The protein belongs to the tRNA(Ile)-lysidine synthase family.

Its subcellular location is the cytoplasm. It catalyses the reaction cytidine(34) in tRNA(Ile2) + L-lysine + ATP = lysidine(34) in tRNA(Ile2) + AMP + diphosphate + H(+). Ligates lysine onto the cytidine present at position 34 of the AUA codon-specific tRNA(Ile) that contains the anticodon CAU, in an ATP-dependent manner. Cytidine is converted to lysidine, thus changing the amino acid specificity of the tRNA from methionine to isoleucine. This is tRNA(Ile)-lysidine synthase from Clostridium acetobutylicum (strain ATCC 824 / DSM 792 / JCM 1419 / IAM 19013 / LMG 5710 / NBRC 13948 / NRRL B-527 / VKM B-1787 / 2291 / W).